A 1151-amino-acid polypeptide reads, in one-letter code: SCF E3 ubiquitin ligase complex F-box protein GRR1 (1151 aa).

Residues 1 to 18 (MDQDNNNHNDSNRLHPPD) show a composition bias toward basic and acidic residues. Residues 1 to 72 (MDQDNNNHND…ATSERNASEV (72 aa)) are disordered. Over residues 38-49 (NNNNNNNNNNNN) the composition is skewed to low complexity. Basic and acidic residues predominate over residues 58-72 (RTRETATSERNASEV). Phosphoserine is present on residues serine 199 and serine 300. The region spanning 314 to 361 (VFALNMLPSEILHLILDKLNQKYDIVKFLTVSKLWAEIIVKILYYRPH) is the F-box domain. LRR repeat units follow at residues 399 to 423 (GDYM…TLVF), 424 to 449 (CKHI…DITG), 450 to 475 (IRDV…YVPQ), 476 to 501 (ARNV…KITA), 502 to 527 (NNNM…DITL), 528 to 553 (SPNV…RITH), 554 to 582 (NTNI…DLSG), 583 to 608 (CENI…FLGK), 609 to 634 (CSRI…HFGH), 635 to 660 (CFNI…DFAC), 661 to 685 (CTNL…GLVK), 686 to 714 (CTQM…HLSY), and 715 to 740 (CSNL…SLTA). Over residues 1066–1080 (AGANDTSNNETNNGN) the composition is skewed to low complexity. Disordered stretches follow at residues 1066–1090 (AGAN…NPNF) and 1118–1151 (VRNN…EDML).

In terms of assembly, interacts with SKP1. Component of the probable SCF(GRR1) complex containing CDC53, SKP1, RBX1 and GRR1.

Its subcellular location is the membrane. It participates in protein modification; protein ubiquitination. In terms of biological role, substrate recognition component of a SCF (SKP1-CUL1-F-box protein) E3 ubiquitin-protein ligase complex which mediates the ubiquitination and subsequent proteasomal degradation of target proteins. Recognizes and directs ubiquitination of phosphorylated CLN1, CLN2 and GIC2. Probably constitutes the primary response element required for the generation or interpretation of the signal that induces glucose repression. The protein is SCF E3 ubiquitin ligase complex F-box protein GRR1 (GRR1) of Saccharomyces cerevisiae (strain ATCC 204508 / S288c) (Baker's yeast).